Consider the following 306-residue polypeptide: MINPIYLILADFFDRYIGEPPEKVHPVIFIGKLIIFFENVFKSTNSINKSRDLLFGFFNVILVLAIVFFMAYEIEQVINSISNSYIRISLYSIILSFSIGHKSLIEFSKAPIRYIVNNDIDGAKKSVQCVVSRNTSELGKKHILSASIESASENITDSIIAPLIYVAIFGLPGAFLYRAVNTFDAMIGYKSEKYLYYGKTAAYLDDILNFIPSRIAGMLLIITAPFYGGKIKSAFYGFFKEGNKTPSPNSGYTMATIANSLNMGLEKIGCYKLGKGEITIEKALNSLKAVDYSVLLFLIIYTVLLM.

6 helical membrane passes run 17–37 (IGEP…IIFF), 54–74 (LFGF…AYEI), 88–108 (ISLY…IEFS), 155–175 (ITDS…PGAF), 207–227 (ILNF…APFY), and 286–306 (SLKA…VLLM).

This sequence belongs to the CobD/CbiB family.

The protein resides in the cell membrane. Its pathway is cofactor biosynthesis; adenosylcobalamin biosynthesis. Converts cobyric acid to cobinamide by the addition of aminopropanol on the F carboxylic group. The protein is Probable cobalamin biosynthesis protein CobD of Methanococcus maripaludis (strain C5 / ATCC BAA-1333).